Reading from the N-terminus, the 504-residue chain is MDKNKIIIFDTTLRDGEQSPGASMNTAEKLQIALQLERLGVDVMEAGFAAASPGDFDAVNQIAKQASNITVCSLARAVERDIKAAGEALAPAKNKRIHTFIATSPIHMQYKLKMSPDEVIRCAVEAVQYSKTFCDDVEFSCEDACRSEMSFLKEICEAAINAGAKTINIPDTVGYLYPEEITARISEIVKFIGDRAVVSVHNHNDLGMATANSLAAIKAGARQVEGTINGIGERAGNAALEEIVMAIKTRQDVFAPLYTGIISKEIYPTSRLIASITGIEPQPNKAIVGKNAFAHESGIHQDGVLKHKETYEIISAESIGLEKNSLVLGKHSGRHAFKDKLASLGFDLDSDALNKAFEKFKDLADKKKEIFDDDIRALVAEEITKIPQAYEITDLLQSSGGSLASASMSIRHNDEIVSDSALGNGTADAIFKVVDRISGINGTLKDYKVTAVSQGKDALAKVDVKVEFEGKTAVMGHGLDIDTMMASAKAYVGALNSYLRIHKN.

The region spanning 6-267 is the Pyruvate carboxyltransferase domain; that stretch reads IIIFDTTLRD…YTGIISKEIY (262 aa). The Mn(2+) site is built by Asp-15, His-201, His-203, and Asn-237. Positions 391–504 are regulatory domain; sequence EITDLLQSSG…LNSYLRIHKN (114 aa).

The protein belongs to the alpha-IPM synthase/homocitrate synthase family. LeuA type 1 subfamily. Homodimer. Mn(2+) is required as a cofactor.

It localises to the cytoplasm. The enzyme catalyses 3-methyl-2-oxobutanoate + acetyl-CoA + H2O = (2S)-2-isopropylmalate + CoA + H(+). Its pathway is amino-acid biosynthesis; L-leucine biosynthesis; L-leucine from 3-methyl-2-oxobutanoate: step 1/4. Catalyzes the condensation of the acetyl group of acetyl-CoA with 3-methyl-2-oxobutanoate (2-ketoisovalerate) to form 3-carboxy-3-hydroxy-4-methylpentanoate (2-isopropylmalate). This Campylobacter concisus (strain 13826) protein is 2-isopropylmalate synthase.